A 276-amino-acid polypeptide reads, in one-letter code: Outer membrane lipoprotein 2 (276 aa).

The first 19 residues, 1 to 19 (MNFKKLLGVALVSALALTA), serve as a signal peptide directing secretion. Residue Cys-20 is the site of N-palmitoyl cysteine attachment. A lipid anchor (S-diacylglycerol cysteine) is attached at Cys-20.

Belongs to the NlpA lipoprotein family.

The protein resides in the cell outer membrane. The chain is Outer membrane lipoprotein 2 (plpB) from Mannheimia haemolytica (Pasteurella haemolytica).